A 157-amino-acid polypeptide reads, in one-letter code: Deoxyuridine 5'-triphosphate nucleotidohydrolase (157 aa).

Positions 63, 76, 79, 82, 87, 132, 137, and 138 each coordinate dUMP. The disordered stretch occupies residues 125–157 (NDLESTERGAGGFGSTGINDEKKRKLDEAEAKE). Basic and acidic residues predominate over residues 143 to 157 (NDEKKRKLDEAEAKE).

This sequence belongs to the dUTPase family. As to quaternary structure, homotrimer. The cofactor is Mg(2+).

It catalyses the reaction dUTP + H2O = dUMP + diphosphate + H(+). It functions in the pathway pyrimidine metabolism; dUMP biosynthesis; dUMP from dCTP (dUTP route): step 2/2. In terms of biological role, involved in nucleotide metabolism via production of dUMP, the immediate precursor of thymidine nucleotides, and decreases the intracellular concentration of dUTP so that uracil cannot be incorporated into DNA. This is Deoxyuridine 5'-triphosphate nucleotidohydrolase (DUT1) from Yarrowia lipolytica (strain CLIB 122 / E 150) (Yeast).